A 431-amino-acid chain; its full sequence is Enolase (431 aa).

Residue glutamine 175 participates in (2R)-2-phosphoglycerate binding. Glutamate 217 (proton donor) is an active-site residue. Mg(2+) is bound by residues aspartate 254, glutamate 295, and aspartate 322. (2R)-2-phosphoglycerate-binding residues include lysine 347, arginine 376, serine 377, and lysine 398. Lysine 347 acts as the Proton acceptor in catalysis.

It belongs to the enolase family. Mg(2+) serves as cofactor.

The protein resides in the cytoplasm. It is found in the secreted. The protein localises to the cell surface. It carries out the reaction (2R)-2-phosphoglycerate = phosphoenolpyruvate + H2O. The protein operates within carbohydrate degradation; glycolysis; pyruvate from D-glyceraldehyde 3-phosphate: step 4/5. Catalyzes the reversible conversion of 2-phosphoglycerate (2-PG) into phosphoenolpyruvate (PEP). It is essential for the degradation of carbohydrates via glycolysis. The sequence is that of Enolase from Anaplasma marginale (strain St. Maries).